The primary structure comprises 439 residues: tRNA-2-methylthio-N(6)-dimethylallyladenosine synthase (439 aa).

Residues 5-121 (KKLFIKTYGC…LPELEAKTRA (117 aa)) enclose the MTTase N-terminal domain. Positions 14, 50, 84, 159, 163, and 166 each coordinate [4Fe-4S] cluster. The Radical SAM core domain maps to 145-378 (AKRGPTAFLT…ITRHQREIQD (234 aa)). Positions 378–439 (DGMVGREVSV…GANSLAGELA (62 aa)) constitute a TRAM domain.

This sequence belongs to the methylthiotransferase family. MiaB subfamily. As to quaternary structure, monomer. [4Fe-4S] cluster is required as a cofactor.

It is found in the cytoplasm. The catalysed reaction is N(6)-dimethylallyladenosine(37) in tRNA + (sulfur carrier)-SH + AH2 + 2 S-adenosyl-L-methionine = 2-methylsulfanyl-N(6)-dimethylallyladenosine(37) in tRNA + (sulfur carrier)-H + 5'-deoxyadenosine + L-methionine + A + S-adenosyl-L-homocysteine + 2 H(+). Catalyzes the methylthiolation of N6-(dimethylallyl)adenosine (i(6)A), leading to the formation of 2-methylthio-N6-(dimethylallyl)adenosine (ms(2)i(6)A) at position 37 in tRNAs that read codons beginning with uridine. This is tRNA-2-methylthio-N(6)-dimethylallyladenosine synthase from Ruegeria pomeroyi (strain ATCC 700808 / DSM 15171 / DSS-3) (Silicibacter pomeroyi).